Reading from the N-terminus, the 388-residue chain is Succinate--CoA ligase [ADP-forming] subunit beta (388 aa).

Residues 9–244 (KEILRKYNVP…LDEEDANEIE (236 aa)) form the ATP-grasp domain. ATP contacts are provided by residues Lys46, 53–55 (GRG), Glu99, Ala102, and Glu107. Residues Asn199 and Asp213 each coordinate Mg(2+). Residues Asn264 and 321 to 323 (GIM) each bind substrate.

The protein belongs to the succinate/malate CoA ligase beta subunit family. Heterotetramer of two alpha and two beta subunits. The cofactor is Mg(2+).

It carries out the reaction succinate + ATP + CoA = succinyl-CoA + ADP + phosphate. The enzyme catalyses GTP + succinate + CoA = succinyl-CoA + GDP + phosphate. Its pathway is carbohydrate metabolism; tricarboxylic acid cycle; succinate from succinyl-CoA (ligase route): step 1/1. Succinyl-CoA synthetase functions in the citric acid cycle (TCA), coupling the hydrolysis of succinyl-CoA to the synthesis of either ATP or GTP and thus represents the only step of substrate-level phosphorylation in the TCA. The beta subunit provides nucleotide specificity of the enzyme and binds the substrate succinate, while the binding sites for coenzyme A and phosphate are found in the alpha subunit. This is Succinate--CoA ligase [ADP-forming] subunit beta from Cupriavidus taiwanensis (strain DSM 17343 / BCRC 17206 / CCUG 44338 / CIP 107171 / LMG 19424 / R1) (Ralstonia taiwanensis (strain LMG 19424)).